The sequence spans 354 residues: MAELKNDRYLRALLKQPVDRTPVWMMRQAGRYLPEYKATRAEAGDFMSLCKNQDLACEVTLQPLRRYDLDAAILFSDILTVPDAMGLGLYFETGEGPRFERPTDTIDSIKKLCIPDPEDELGYVMRAVSTIRRELKGEVPLIGFSGSPWTLATYMVEGGSSKTFEKIKKMAYEEPATLHMLLDKLADSVILYLNAQVANGAQSLMIFDSWGGALSHHAYREFSLRYMQKIVDGLTRHADGRQVPVTLFTKGGGLWLESMAETGCDALGLDWTVDIGDARRRVGNKVALQGNMDPSVLYASPERIHQEVEQILSSYGEGTGHVFNLGHGIHQHVNPEHAGSFINSVHELSGKYHK.

Residues 27 to 31, Asp-77, Tyr-154, Ser-209, and His-327 each bind substrate; that span reads RQAGR.

This sequence belongs to the uroporphyrinogen decarboxylase family. Homodimer.

Its subcellular location is the cytoplasm. It catalyses the reaction uroporphyrinogen III + 4 H(+) = coproporphyrinogen III + 4 CO2. Its pathway is porphyrin-containing compound metabolism; protoporphyrin-IX biosynthesis; coproporphyrinogen-III from 5-aminolevulinate: step 4/4. Functionally, catalyzes the decarboxylation of four acetate groups of uroporphyrinogen-III to yield coproporphyrinogen-III. The sequence is that of Uroporphyrinogen decarboxylase from Shewanella piezotolerans (strain WP3 / JCM 13877).